The primary structure comprises 147 residues: Large ribosomal subunit protein uL15 (147 aa).

A disordered region spans residues 1-55 (MKLHEIAPQPGSTKRRRRVGRGVSAGQGASCGLGMRGQKSRSGTGTRPGFEGGQM). A compositionally biased stretch (gly residues) spans 23–35 (VSAGQGASCGLGM).

This sequence belongs to the universal ribosomal protein uL15 family. As to quaternary structure, part of the 50S ribosomal subunit.

Its function is as follows. Binds to the 23S rRNA. The sequence is that of Large ribosomal subunit protein uL15 from Microcystis aeruginosa (strain NIES-843 / IAM M-2473).